A 162-amino-acid chain; its full sequence is Probable ergosterol biosynthetic protein 28 homolog (162 aa).

4 consecutive transmembrane segments (helical) span residues 7 to 25, 40 to 60, 69 to 89, and 96 to 116; these read AWMS…MCYA, LSRA…VLIF, IAHI…VFFY, and IVTV…LTFL.

It belongs to the ERG28 family. As to expression, expressed in tissues including muscles, intestine and neurons.

It localises to the endoplasmic reticulum membrane. The protein localises to the cell projection. Its subcellular location is the dendrite. Its function is as follows. Promotes the translocation of slo-1 potassium ion channels from the endoplasmic reticulum to its final destination at the plasma membrane, probably by shielding from premature proteasomal degradation in the endoplasmic reticulum. Maintains the levels of slo-1 potassium ion channel at the presynaptic neurons. This Caenorhabditis elegans protein is Probable ergosterol biosynthetic protein 28 homolog.